Reading from the N-terminus, the 261-residue chain is Ribosomal RNA small subunit methyltransferase A (261 aa).

Residues histidine 13, leucine 15, glycine 40, glutamate 61, aspartate 85, and asparagine 105 each contribute to the S-adenosyl-L-methionine site.

It belongs to the class I-like SAM-binding methyltransferase superfamily. rRNA adenine N(6)-methyltransferase family. RsmA subfamily.

It localises to the cytoplasm. The enzyme catalyses adenosine(1518)/adenosine(1519) in 16S rRNA + 4 S-adenosyl-L-methionine = N(6)-dimethyladenosine(1518)/N(6)-dimethyladenosine(1519) in 16S rRNA + 4 S-adenosyl-L-homocysteine + 4 H(+). In terms of biological role, specifically dimethylates two adjacent adenosines (A1518 and A1519) in the loop of a conserved hairpin near the 3'-end of 16S rRNA in the 30S particle. May play a critical role in biogenesis of 30S subunits. The protein is Ribosomal RNA small subunit methyltransferase A of Flavobacterium johnsoniae (strain ATCC 17061 / DSM 2064 / JCM 8514 / BCRC 14874 / CCUG 350202 / NBRC 14942 / NCIMB 11054 / UW101) (Cytophaga johnsonae).